We begin with the raw amino-acid sequence, 67 residues long: DNA-directed RNA polymerase subunit omega (67 aa).

Belongs to the RNA polymerase subunit omega family. The RNAP catalytic core consists of 2 alpha, 1 beta, 1 beta' and 1 omega subunit. When a sigma factor is associated with the core the holoenzyme is formed, which can initiate transcription.

It catalyses the reaction RNA(n) + a ribonucleoside 5'-triphosphate = RNA(n+1) + diphosphate. Functionally, promotes RNA polymerase assembly. Latches the N- and C-terminal regions of the beta' subunit thereby facilitating its interaction with the beta and alpha subunits. This is DNA-directed RNA polymerase subunit omega from Legionella pneumophila (strain Paris).